A 243-amino-acid chain; its full sequence is Type III pantothenate kinase (243 aa).

Residue 7 to 14 participates in ATP binding; that stretch reads DLGNSRFK. Residues tyrosine 91 and 98–101 contribute to the substrate site; that span reads GVDR. Aspartate 100 acts as the Proton acceptor in catalysis. Threonine 122 lines the ATP pocket. Threonine 172 contributes to the substrate binding site.

The protein belongs to the type III pantothenate kinase family. In terms of assembly, homodimer. NH4(+) is required as a cofactor. K(+) serves as cofactor.

It is found in the cytoplasm. The enzyme catalyses (R)-pantothenate + ATP = (R)-4'-phosphopantothenate + ADP + H(+). Its pathway is cofactor biosynthesis; coenzyme A biosynthesis; CoA from (R)-pantothenate: step 1/5. Catalyzes the phosphorylation of pantothenate (Pan), the first step in CoA biosynthesis. The sequence is that of Type III pantothenate kinase from Stenotrophomonas maltophilia (strain R551-3).